Reading from the N-terminus, the 547-residue chain is Cytochrome P450 monooxygenase oblB (547 aa).

2 consecutive transmembrane segments (helical) span residues 42-62 (GAVG…RLFL) and 242-262 (FDMF…PWLI). N-linked (GlcNAc...) asparagine glycosylation is present at Asn277. The helical transmembrane segment at 345–365 (VLIGSGTMTTAGTMGFLCYYI) threads the bilayer. A heme-binding site is contributed by Cys489.

This sequence belongs to the cytochrome P450 family. The cofactor is heme.

Its subcellular location is the membrane. It carries out the reaction ophiobolin F + 4 reduced [NADPH--hemoprotein reductase] + 4 O2 = ophiobolin C + 4 oxidized [NADPH--hemoprotein reductase] + 6 H2O + 4 H(+). It functions in the pathway secondary metabolite biosynthesis; terpenoid biosynthesis. Functionally, cytochrome P450 monooxygenase; part of the gene cluster that mediates the biosynthesis of the sesterterpenes ophiobolins, fungal phytotoxins with potential anti-cancer activities. The first step of the pathway is performed by the sesterterpene synthase oblA that possesses both prenyl transferase and terpene cyclase activity, converting isopentenyl diphosphate and dimethylallyl diphosphate into geranylfarnesyl diphosphate (GFPP) and further converting GFPP into ophiobolin F, respectively. Other sesterterpenoids (C(25) terpenoids) are found as minor products of oblA. The cytochrome P450 monooxygenase oblB then catalyzes a four-step oxidative transformation of ophiobolin F to yield ophiobolin C. The function of the cytochrome P450 monooxygenase oblE has still to be determined. The sequence is that of Cytochrome P450 monooxygenase oblB from Emericella variicolor (Aspergillus stellatus).